Consider the following 478-residue polypeptide: RNA pseudouridine synthase 3, mitochondrial (478 aa).

The transit peptide at 1 to 20 (MWKAKTCFRQIYLTVLIRRY) directs the protein to the mitochondrion. In terms of domain architecture, S4 RNA-binding spans 92 to 162 (EEIYDKAIQT…MRISKRYDTI (71 aa)). The active site involves Asp-232.

It belongs to the pseudouridine synthase RluA family.

The protein localises to the mitochondrion. The catalysed reaction is a uridine in RNA = a pseudouridine in RNA. In Arabidopsis thaliana (Mouse-ear cress), this protein is RNA pseudouridine synthase 3, mitochondrial.